The primary structure comprises 203 residues: Pyridoxine/pyridoxamine 5'-phosphate oxidase (203 aa).

FMN is bound by residues 50–55 (RMVLLK), 65–66 (YT), K72, and Q94. Residue K55 participates in substrate binding. Positions 112, 116, and 120 each coordinate substrate. Residues 129–130 (QS) and W174 contribute to the FMN site. Substrate is bound at residue 180-182 (RLH). R184 lines the FMN pocket.

The protein belongs to the pyridoxamine 5'-phosphate oxidase family. As to quaternary structure, homodimer. FMN serves as cofactor.

It catalyses the reaction pyridoxamine 5'-phosphate + O2 + H2O = pyridoxal 5'-phosphate + H2O2 + NH4(+). The catalysed reaction is pyridoxine 5'-phosphate + O2 = pyridoxal 5'-phosphate + H2O2. The protein operates within cofactor metabolism; pyridoxal 5'-phosphate salvage; pyridoxal 5'-phosphate from pyridoxamine 5'-phosphate: step 1/1. It functions in the pathway cofactor metabolism; pyridoxal 5'-phosphate salvage; pyridoxal 5'-phosphate from pyridoxine 5'-phosphate: step 1/1. Its function is as follows. Catalyzes the oxidation of either pyridoxine 5'-phosphate (PNP) or pyridoxamine 5'-phosphate (PMP) into pyridoxal 5'-phosphate (PLP). The protein is Pyridoxine/pyridoxamine 5'-phosphate oxidase of Brucella anthropi (strain ATCC 49188 / DSM 6882 / CCUG 24695 / JCM 21032 / LMG 3331 / NBRC 15819 / NCTC 12168 / Alc 37) (Ochrobactrum anthropi).